The sequence spans 61 residues: Probable pancreatic secretory proteinase inhibitor (61 aa).

The Kazal-like domain maps to 6–61 (LYRKPSCGEMSAMHACPMNFAPVCGTDGNTYPNECSLCFQRQNTKTDILITKDDRC). Disulfide bonds link cysteine 12-cysteine 43, cysteine 21-cysteine 40, and cysteine 29-cysteine 61.

It localises to the secreted. This Anguilla anguilla (European freshwater eel) protein is Probable pancreatic secretory proteinase inhibitor.